Reading from the N-terminus, the 557-residue chain is Carbamoyl phosphate synthase large chain, N-terminal section (557 aa).

A carboxyphosphate synthetic domain region spans residues 1-402; the sequence is MPKRTDIKKI…ALLKAVRSLE (402 aa). Residues arginine 129, arginine 169, glycine 175, glycine 176, lysine 208, leucine 210, glutamate 215, glycine 241, valine 242, histidine 243, glutamine 285, and glutamate 299 each contribute to the ATP site. An ATP-grasp domain is found at 133 to 328; sequence KETMESIGLK…IAKVAAKLAV (196 aa). Mg(2+) contacts are provided by glutamine 285, glutamate 299, and asparagine 301. Positions 285, 299, and 301 each coordinate Mn(2+). An oligomerization domain region spans residues 403–553; the sequence is LDRYGLAFPK…PYYTVDGQEI (151 aa).

This sequence belongs to the CarB family. As to quaternary structure, composed of two chains; the small (or glutamine) chain promotes the hydrolysis of glutamine to ammonia, which is used by the large (or ammonia) chain to synthesize carbamoyl phosphate. Tetramer of heterodimers (alpha,beta)4. Mg(2+) serves as cofactor. It depends on Mn(2+) as a cofactor.

The enzyme catalyses hydrogencarbonate + L-glutamine + 2 ATP + H2O = carbamoyl phosphate + L-glutamate + 2 ADP + phosphate + 2 H(+). It catalyses the reaction hydrogencarbonate + NH4(+) + 2 ATP = carbamoyl phosphate + 2 ADP + phosphate + 2 H(+). It functions in the pathway amino-acid biosynthesis; L-arginine biosynthesis; carbamoyl phosphate from bicarbonate: step 1/1. Its pathway is pyrimidine metabolism; UMP biosynthesis via de novo pathway; (S)-dihydroorotate from bicarbonate: step 1/3. Its function is as follows. Large subunit of the glutamine-dependent carbamoyl phosphate synthetase (CPSase). CPSase catalyzes the formation of carbamoyl phosphate from the ammonia moiety of glutamine, carbonate, and phosphate donated by ATP, constituting the first step of 2 biosynthetic pathways, one leading to arginine and/or urea and the other to pyrimidine nucleotides. The large subunit (synthetase) binds the substrates ammonia (free or transferred from glutamine from the small subunit), hydrogencarbonate and ATP and carries out an ATP-coupled ligase reaction, activating hydrogencarbonate by forming carboxy phosphate which reacts with ammonia to form carbamoyl phosphate. This is Carbamoyl phosphate synthase large chain, N-terminal section (carB1) from Aquifex aeolicus (strain VF5).